The primary structure comprises 165 residues: MERFFENAMYASRWLLAPVYFGLSLALVALSIKFFQEIFHVLPNIFSVAESDLILVLLSLVDMTLVGGLLVMVMFSGYENFVSQLDIAEHKEKLSWLGKMDASSLKNKVAASIVAISSIHLLRVFMDAKNIPDNKLMWYVIIHLTFVLSAFVMGYLDKINRSGKY.

3 helical membrane passes run leucine 15–phenylalanine 35, leucine 53–valine 73, and leucine 136–leucine 156.

This sequence belongs to the UPF0114 family.

It is found in the cell membrane. The sequence is that of UPF0114 protein Ent638_3411 from Enterobacter sp. (strain 638).